Consider the following 148-residue polypeptide: Globin-3 (148 aa).

The Globin domain maps to 2-148 (TLTKHEQDIL…HVFPMMAAEI (147 aa)). Residue His-99 participates in heme binding.

Belongs to the globin family. Monomer.

Functionally, oxygen binding protein. In Paramphistomum epiclitum, this protein is Globin-3.